Here is a 126-residue protein sequence, read N- to C-terminus: Translation initiation factor 5A (126 aa).

Lys-36 is modified (hypusine).

The protein belongs to the eIF-5A family.

The protein localises to the cytoplasm. Functionally, functions by promoting the formation of the first peptide bond. This is Translation initiation factor 5A from Haloarcula marismortui (strain ATCC 43049 / DSM 3752 / JCM 8966 / VKM B-1809) (Halobacterium marismortui).